Reading from the N-terminus, the 458-residue chain is Exodeoxyribonuclease 7 large subunit (458 aa).

This sequence belongs to the XseA family. In terms of assembly, heterooligomer composed of large and small subunits.

The protein localises to the cytoplasm. It catalyses the reaction Exonucleolytic cleavage in either 5'- to 3'- or 3'- to 5'-direction to yield nucleoside 5'-phosphates.. Its function is as follows. Bidirectionally degrades single-stranded DNA into large acid-insoluble oligonucleotides, which are then degraded further into small acid-soluble oligonucleotides. The protein is Exodeoxyribonuclease 7 large subunit of Escherichia coli O81 (strain ED1a).